Here is a 210-residue protein sequence, read N- to C-terminus: Protein GrpE (210 aa).

The span at 1 to 12 shows a compositional bias: basic and acidic residues; it reads MSDQAKDERAPS. 2 disordered regions span residues 1 to 26 and 191 to 210; these read MSDQ…RTEG and IAAE…EKDA.

This sequence belongs to the GrpE family. As to quaternary structure, homodimer.

It localises to the cytoplasm. In terms of biological role, participates actively in the response to hyperosmotic and heat shock by preventing the aggregation of stress-denatured proteins, in association with DnaK and GrpE. It is the nucleotide exchange factor for DnaK and may function as a thermosensor. Unfolded proteins bind initially to DnaJ; upon interaction with the DnaJ-bound protein, DnaK hydrolyzes its bound ATP, resulting in the formation of a stable complex. GrpE releases ADP from DnaK; ATP binding to DnaK triggers the release of the substrate protein, thus completing the reaction cycle. Several rounds of ATP-dependent interactions between DnaJ, DnaK and GrpE are required for fully efficient folding. The polypeptide is Protein GrpE (Mesorhizobium japonicum (strain LMG 29417 / CECT 9101 / MAFF 303099) (Mesorhizobium loti (strain MAFF 303099))).